The sequence spans 713 residues: Histone-lysine N-methyltransferase SETDB2 (713 aa).

The disordered stretch occupies residues 78 to 109 (PEVNTHRSNHTPVTQSEQENKSSAVPSASCDN). A compositionally biased stretch (polar residues) spans 87 to 109 (HTPVTQSEQENKSSAVPSASCDN). In terms of domain architecture, MBD spans 161-233 (LSLKGENPLQ…DNFSFNTYVQ (73 aa)). One can recognise a Pre-SET domain in the interval 294 to 367 (DSCDCSEGCI…MCQNRVIQHG (74 aa)). The Zn(2+) site is built by C296, C298, C302, C308, C310, C348, C352, C354, and C359. The SET domain maps to 370-688 (VRLQVFKSEK…ARTELTWDYG (319 aa)). 380 to 382 (KGW) provides a ligand contact to S-adenosyl-L-methionine. 2 stretches are compositionally biased toward basic and acidic residues: residues 511–534 (EDKN…HEDL) and 579–592 (TKQV…KSQE). 2 disordered regions span residues 511-549 (EDKN…QLTE) and 579-608 (TKQV…CDEE). S-adenosyl-L-methionine-binding positions include R642 and 645 to 646 (NH). 4 residues coordinate Zn(2+): C648, C701, C703, and C708.

This sequence belongs to the class V-like SAM-binding methyltransferase superfamily.

The protein resides in the nucleus. It is found in the chromosome. It catalyses the reaction N(6),N(6)-dimethyl-L-lysyl(9)-[histone H3] + S-adenosyl-L-methionine = N(6),N(6),N(6)-trimethyl-L-lysyl(9)-[histone H3] + S-adenosyl-L-homocysteine + H(+). Histone methyltransferase involved in left-right axis specification in early development and mitosis. Specifically trimethylates 'Lys-9' of histone H3 (H3K9me3). H3K9me3 is a specific tag for epigenetic transcriptional repression that recruits HP1 (CBX1, CBX3 and/or CBX5) proteins to methylated histones. Contributes to H3K9me3 in both the interspersed repetitive elements and centromere-associated repeats. Plays a role in chromosome condensation and segregation during mitosis. The chain is Histone-lysine N-methyltransferase SETDB2 (Setdb2) from Mus musculus (Mouse).